The primary structure comprises 309 residues: Homoserine kinase (309 aa).

ATP is bound at residue 91-101; it reads PIGSGLGSSAC.

Belongs to the GHMP kinase family. Homoserine kinase subfamily.

The protein localises to the cytoplasm. It carries out the reaction L-homoserine + ATP = O-phospho-L-homoserine + ADP + H(+). It participates in amino-acid biosynthesis; L-threonine biosynthesis; L-threonine from L-aspartate: step 4/5. Its function is as follows. Catalyzes the ATP-dependent phosphorylation of L-homoserine to L-homoserine phosphate. The chain is Homoserine kinase from Pectobacterium atrosepticum (strain SCRI 1043 / ATCC BAA-672) (Erwinia carotovora subsp. atroseptica).